Consider the following 431-residue polypeptide: F-box/kelch-repeat protein At4g19930 (431 aa).

The region spanning 37 to 83 (HEPMPYIPFDLVIEILTRLPAKSLMRFKSVSKLWSSLICSRTFTNRL) is the F-box domain. Kelch repeat units follow at residues 143-189 (LSHV…KNKK) and 227-275 (WVFI…PMLV).

This Arabidopsis thaliana (Mouse-ear cress) protein is F-box/kelch-repeat protein At4g19930.